Reading from the N-terminus, the 520-residue chain is Kelch domain-containing protein 4 (520 aa).

The span at 1–10 (MGKKGKKEKK) shows a compositional bias: basic residues. The tract at residues 1–33 (MGKKGKKEKKGRGAEKTAAKMEKKVSKRSRKEE) is disordered. The span at 11–24 (GRGAEKTAAKMEKK) shows a compositional bias: basic and acidic residues. Kelch repeat units lie at residues 77 to 129 (ELIL…VVPQ), 133 to 187 (QLWV…AWKR), 188 to 241 (QLIL…VTPQ), 243 to 289 (GIVV…MNPS), and 308 to 361 (QTLF…RRGR). Disordered stretches follow at residues 346–379 (QLKGPKSEKKKRRRGRKEEPEGGSRPACGGAGTQ), 402–431 (LTAPGSAGQPRSEDEDSLEEAGSPAPGPCP), and 481–520 (DPETQEWLEETDSEEDSEEVEGAEGGVDDEDSGEESGAED). Phosphoserine is present on residues serine 413 and serine 418. The Kelch 6 repeat unit spans residues 443–494 (VLYVYGGMFEAGDRQVTLSDLHCLDLHRMEAWKALVEMDPETQEWLEETDSE).

This is Kelch domain-containing protein 4 (KLHDC4) from Homo sapiens (Human).